The following is a 728-amino-acid chain: 1,4-alpha-glucan branching enzyme GlgB (728 aa).

Catalysis depends on D405, which acts as the Nucleophile. Residue E458 is the Proton donor of the active site.

This sequence belongs to the glycosyl hydrolase 13 family. GlgB subfamily. Monomer.

The catalysed reaction is Transfers a segment of a (1-&gt;4)-alpha-D-glucan chain to a primary hydroxy group in a similar glucan chain.. It functions in the pathway glycan biosynthesis; glycogen biosynthesis. Its function is as follows. Catalyzes the formation of the alpha-1,6-glucosidic linkages in glycogen by scission of a 1,4-alpha-linked oligosaccharide from growing alpha-1,4-glucan chains and the subsequent attachment of the oligosaccharide to the alpha-1,6 position. This Escherichia coli O6:K15:H31 (strain 536 / UPEC) protein is 1,4-alpha-glucan branching enzyme GlgB.